A 209-amino-acid chain; its full sequence is Lectin (209 aa).

As to quaternary structure, homodimer; non-covalently linked.

Its function is as follows. Binds chito-oligosaccherides. Has hemagglutinating activity towards rabbit erythrocytes. This Luffa acutangula (Ridged gourd) protein is Lectin.